The chain runs to 112 residues: Glutaredoxin-C6 (112 aa).

A Glutaredoxin domain is found at 3–103 (LAKAKETVAS…PLLTEAGAIA (101 aa)). The cysteines at positions 23 and 26 are disulfide-linked.

The protein belongs to the glutaredoxin family. CPYC subfamily. In terms of processing, the N-terminus is blocked. As to expression, expressed in aleurone layer.

The protein localises to the cytoplasm. Its function is as follows. Has a glutathione-disulfide oxidoreductase activity in the presence of NADPH and glutathione reductase. Reduces low molecular weight disulfides and proteins. Possesses thioltransferase, dehydroascorbate reductase and GSH-dependent peroxidase activities in vitro. In Oryza sativa subsp. japonica (Rice), this protein is Glutaredoxin-C6 (GRXC6).